The primary structure comprises 60 residues: Large ribosomal subunit protein bL32 (60 aa).

The segment at 1-60 is disordered; it reads MAVQQNKKSRSARDMRRSHDALEASTLSVEKSTGEVHLRHHVSPEGVYRGRKVIDKGADE. Residues 11-22 are compositionally biased toward basic and acidic residues; that stretch reads SARDMRRSHDAL.

Belongs to the bacterial ribosomal protein bL32 family.

The protein is Large ribosomal subunit protein bL32 of Ectopseudomonas mendocina (strain ymp) (Pseudomonas mendocina).